Consider the following 444-residue polypeptide: tRNA-2-methylthio-N(6)-dimethylallyladenosine synthase (444 aa).

The 117-residue stretch at 10 to 126 (SSFYIHTFGC…LAGLVAGLRE (117 aa)) folds into the MTTase N-terminal domain. Cys19, Cys55, Cys89, Cys163, Cys167, and Cys170 together coordinate [4Fe-4S] cluster. Positions 149–379 (RAGSISAFLP…IELQNAISRE (231 aa)) constitute a Radical SAM core domain. In terms of domain architecture, TRAM spans 382-444 (QREIGKTVEV…TSATLSGEAV (63 aa)).

Belongs to the methylthiotransferase family. MiaB subfamily. Monomer. [4Fe-4S] cluster is required as a cofactor.

The protein localises to the cytoplasm. It catalyses the reaction N(6)-dimethylallyladenosine(37) in tRNA + (sulfur carrier)-SH + AH2 + 2 S-adenosyl-L-methionine = 2-methylsulfanyl-N(6)-dimethylallyladenosine(37) in tRNA + (sulfur carrier)-H + 5'-deoxyadenosine + L-methionine + A + S-adenosyl-L-homocysteine + 2 H(+). In terms of biological role, catalyzes the methylthiolation of N6-(dimethylallyl)adenosine (i(6)A), leading to the formation of 2-methylthio-N6-(dimethylallyl)adenosine (ms(2)i(6)A) at position 37 in tRNAs that read codons beginning with uridine. The polypeptide is tRNA-2-methylthio-N(6)-dimethylallyladenosine synthase (Chlorobaculum tepidum (strain ATCC 49652 / DSM 12025 / NBRC 103806 / TLS) (Chlorobium tepidum)).